The following is a 175-amino-acid chain: Interleukin-10 (175 aa).

The N-terminal stretch at 1–21 is a signal peptide; sequence MQTCCQALLLLLAACTLPAHC. Disulfide bonds link Cys26–Cys123 and Cys77–Cys129.

This sequence belongs to the IL-10 family. Homodimer. Interacts with IL10RA and IL10RB. Expressed predominantly in bursa of Fabricius and cecal tonsils with low levels in thymus, liver and lung.

Its subcellular location is the secreted. Major immune regulatory cytokine that acts on many cells of the immune system where it has profound anti-inflammatory functions, limiting excessive tissue disruption caused by inflammation. Mechanistically, IL10 binds to its heterotetrameric receptor comprising IL10RA and IL10RB leading to JAK1 and STAT2-mediated phosphorylation of STAT3. In turn, STAT3 translocates to the nucleus where it drives expression of anti-inflammatory mediators. Targets antigen-presenting cells (APCs) such as macrophages and monocytes and inhibits their release of pro-inflammatory cytokines including granulocyte-macrophage colony-stimulating factor /GM-CSF, granulocyte colony-stimulating factor/G-CSF, IL-1 alpha, IL-1 beta, IL-6, IL-8 and TNF-alpha. Also interferes with antigen presentation by reducing the expression of MHC-class II and co-stimulatory molecules, thereby inhibiting their ability to induce T cell activation. In addition, controls the inflammatory response of macrophages by reprogramming essential metabolic pathways including mTOR signaling. The sequence is that of Interleukin-10 from Gallus gallus (Chicken).